The primary structure comprises 91 residues: Probable Fe(2+)-trafficking protein (91 aa).

Belongs to the Fe(2+)-trafficking protein family.

Its function is as follows. Could be a mediator in iron transactions between iron acquisition and iron-requiring processes, such as synthesis and/or repair of Fe-S clusters in biosynthetic enzymes. This is Probable Fe(2+)-trafficking protein from Polynucleobacter necessarius subsp. necessarius (strain STIR1).